The primary structure comprises 216 residues: Kynurenine formamidase (216 aa).

A substrate-binding site is contributed by W24. Residues H54, H58, and D60 each contribute to the Zn(2+) site. The Proton donor/acceptor role is filled by H64. The Zn(2+) site is built by H164 and E176.

It belongs to the Cyclase 1 superfamily. KynB family. Homodimer. It depends on Zn(2+) as a cofactor.

The catalysed reaction is N-formyl-L-kynurenine + H2O = L-kynurenine + formate + H(+). It participates in amino-acid degradation; L-tryptophan degradation via kynurenine pathway; L-kynurenine from L-tryptophan: step 2/2. Catalyzes the hydrolysis of N-formyl-L-kynurenine to L-kynurenine, the second step in the kynurenine pathway of tryptophan degradation. This is Kynurenine formamidase from Erythrobacter litoralis (strain HTCC2594).